The chain runs to 315 residues: Ribose-phosphate pyrophosphokinase (315 aa).

ATP-binding positions include 37–39 (DGE) and 96–97 (RQ). 2 residues coordinate Mg(2+): H131 and D170. K194 is an active-site residue. D-ribose 5-phosphate contacts are provided by residues R196, D220, and 224 to 228 (DTGGT).

Belongs to the ribose-phosphate pyrophosphokinase family. Class I subfamily. As to quaternary structure, homohexamer. The cofactor is Mg(2+).

Its subcellular location is the cytoplasm. It carries out the reaction D-ribose 5-phosphate + ATP = 5-phospho-alpha-D-ribose 1-diphosphate + AMP + H(+). The protein operates within metabolic intermediate biosynthesis; 5-phospho-alpha-D-ribose 1-diphosphate biosynthesis; 5-phospho-alpha-D-ribose 1-diphosphate from D-ribose 5-phosphate (route I): step 1/1. In terms of biological role, involved in the biosynthesis of the central metabolite phospho-alpha-D-ribosyl-1-pyrophosphate (PRPP) via the transfer of pyrophosphoryl group from ATP to 1-hydroxyl of ribose-5-phosphate (Rib-5-P). This Yersinia pestis protein is Ribose-phosphate pyrophosphokinase.